A 585-amino-acid polypeptide reads, in one-letter code: Protein NRT1/ PTR FAMILY 4.6 (585 aa).

12 consecutive transmembrane segments (helical) span residues 28–48 (GMLA…AYLA), 75–95 (FMGT…AFFS), 96–116 (TFQI…ILTI), 142–162 (AMLF…KGSL), 184–204 (FFNY…TFVV), 211–231 (GWEW…LIFL), 343–363 (IVLK…CLAQ), 391–411 (IFPV…IIPF), 428–448 (IGVG…VEIK), 465–485 (LPVT…ADLF), 508–528 (SLSW…VSIV), and 554–574 (FYWL…FWAM).

This sequence belongs to the major facilitator superfamily. Proton-dependent oligopeptide transporter (POT/PTR) (TC 2.A.17) family. As to expression, expressed in root hairs and in epidermis of both root tips and mature regions of roots. Detected in shoots, stems, flowers, siliques and imbibed seeds. Expressed in vascular tissues in cotyledons, trus leaves, hypocotyls, roots and inflorescence stems.

Its subcellular location is the cell membrane. In terms of biological role, low-affinity proton-dependent nitrate transporter. Involved in constitutive nitrate uptake. Not involved in histidine or dipeptides transport. Involved in (+)-abscisic acid (ABA) transport, but not in gibberellin, indole-3-acetic acid or jasmonic acid import. Mediates cellular ABA uptake. Nitrate does not compete with abscisic acid as a substrate of NPF4.6. This Arabidopsis thaliana (Mouse-ear cress) protein is Protein NRT1/ PTR FAMILY 4.6 (NPF4.6).